Consider the following 582-residue polypeptide: TRAF-type zinc finger domain-containing protein 1 (582 aa).

Position 2 is an N-acetylalanine (Ala2). The TRAF-type zinc-finger motif lies at 27–103 (IHEIHCQRNI…DLELSILKLK (77 aa)). The residue at position 191 (Ser191) is a Phosphoserine. The disordered stretch occupies residues 216 to 238 (EEQERQERNRGQQPPKEGGEDGA). Residues Ser278, Ser320, Ser326, Ser327, Ser409, Ser415, Ser430, and Ser470 each carry the phosphoserine modification. 2 disordered regions span residues 402-509 (EGIP…IAPG) and 522-582 (PENI…EEEE). Composition is skewed to polar residues over residues 454 to 471 (PFNNMTATYNQLSRSTSG) and 486 to 504 (LNNSDSQDIQGRNQNSQNG).

Interacts with MAVS, TICAM1, TRAF1, TRAF2, TRAF3 and TRAF6.

Functionally, negative feedback regulator that controls excessive innate immune responses. Regulates both Toll-like receptor 4 (TLR4) and DDX58/RIG1-like helicases (RLH) pathways. May inhibit the LTR pathway by direct interaction with TRAF6 and attenuation of NF-kappa-B activation. May negatively regulate the RLH pathway downstream from MAVS and upstream of NF-kappa-B and IRF3. The polypeptide is TRAF-type zinc finger domain-containing protein 1 (TRAFD1) (Macaca fascicularis (Crab-eating macaque)).